Reading from the N-terminus, the 906-residue chain is Glutamate receptor 1 (906 aa).

Residues 1–18 (MQHIFAFFCTGFLGAVVG) form the signal peptide. The Extracellular segment spans residues 19–536 (ANFPNNIQIG…GVFSFLDPLA (518 aa)). N-linked (GlcNAc...) asparagine glycosylation is found at Asn-63, Asn-249, Asn-257, Asn-363, Asn-401, and Asn-406. Cys-75 and Cys-323 form a disulfide bridge. Pro-492, Thr-494, and Arg-499 together coordinate L-glutamate. A helical membrane pass occupies residues 537 to 557 (YEIWMCIVFAYIGVSVVLFLV). Over 558–584 (SRFSPYEWHSEEFEEGRDQTTSDQSNE) the chain is Cytoplasmic. The helical; Pore-forming intramembrane region spans 585 to 600 (FGIFNSLWFSLGAFMQ). Residues 601–603 (QGC) lie within the membrane without spanning it. Residue Cys-603 is the site of S-palmitoyl cysteine attachment. Over 604–609 (DISPRS) the chain is Cytoplasmic. Residues 610–630 (LSGRIVGGVWWFFTLIIISSY) traverse the membrane as a helical segment. Topologically, residues 631 to 805 (TANLAAFLTV…DKTSALSLSN (175 aa)) are extracellular. Ser-645 carries the post-translational modification Phosphoserine. Residues Ser-668 and Thr-669 each contribute to the L-glutamate site. The residue at position 710 (Ser-710) is a Phosphoserine. L-glutamate is bound at residue Glu-719. Cys-732 and Cys-787 are joined by a disulfide. A helical membrane pass occupies residues 806 to 826 (VAGVFYILIGGLGLAMLVALI). Residues 827 to 906 (EFCYKSRSES…SGMPLGATGL (80 aa)) are Cytoplasmic-facing. A lipid anchor (S-palmitoyl cysteine) is attached at Cys-829. Ser-849 and Ser-863 each carry phosphoserine. The interval 861 to 880 (RNSGAGASSGGSGENGRVVS) is disordered. A PDZ-binding motif is present at residues 903 to 906 (ATGL).

It belongs to the glutamate-gated ion channel (TC 1.A.10.1) family. GRIA1 subfamily. As to quaternary structure, homotetramer or heterotetramer of pore-forming glutamate receptor subunits; heteromeric assembly can be the result of both receptor subtype and flip or flop form and according the composition, one partner can be dominant with respect to the fast desensitizing current component, whereas the other can determine the steady-state component. Tetramers may be formed by the dimerization of dimers. Found in a complex with GRIA2, GRIA3, GRIA4, CNIH2, CNIH3, CACNG2, CACNG3, CACNG4, CACNG5, CACNG7 and CACNG8. Interacts with HIP1 and RASGRF2. Interacts with SYNDIG1 and GRIA2. Interacts with DLG1 (via C-terminus). Interacts with LRFN1. Interacts with PRKG2. Interacts with CNIH2 and CACNG2. Interacts with CACNG5; this interaction modulates the gating. Interacts (via C-terminus) with PDLIM4 (via LIM domain); this interaction as well as the interaction of PDLIM4 with alpha-actinin is required for their colocalization in early endosomes. Interacts with SNX27 (via PDZ domain); the interaction is required for recycling to the plasma membrane when endocytosed and prevent degradation in lysosomes. Interacts (via PDZ-binding motif) with SHANK3 (via PDZ domain). Interacts with CACNG3; associates GRIA1 with the adapter protein complex 4 (AP-4) to target GRIA1 to the somatodendritic compartment of neurons. Interacts with CACNG2; this interaction mediates traffick to the plasma membrane and modulation of desensitization. Interacts with CNIH2 and CNIH3; this interaction promotes expression at the plasma membrane and extensively modulates their gating properties by slowing deactivation and desensitization kinetics. Found in a complex with GRIA2, GRIA3, GRIA4, DLG4, CACNG8 and CNIH2. Post-translationally, palmitoylated. Depalmitoylated by CPT1C and upon L-glutamate stimulation. ZDHHC3/GODZ specifically palmitoylates Cys-603, which leads to Golgi retention and decreased cell surface expression. In contrast, Cys-829 palmitoylation does not affect cell surface expression but regulates stimulation-dependent endocytosis. Phosphorylated at Ser-645. Phosphorylated at Ser-710 by PKC. Phosphorylated at Ser-849 by PKC, PKA and CAMK2. Phosphorylated at Ser-863 by PKC, PKA and PRKG2. Phosphorylation of Ser-863 is reduced by induction of long-term depression and increased by induction of long-term potentiation. Widely expressed in brain.

The protein resides in the cell membrane. It is found in the endoplasmic reticulum membrane. It localises to the postsynaptic cell membrane. Its subcellular location is the postsynaptic density membrane. The protein localises to the cell projection. The protein resides in the dendrite. It is found in the dendritic spine. It localises to the early endosome membrane. Its subcellular location is the recycling endosome membrane. The protein localises to the presynapse. The protein resides in the synapse. The enzyme catalyses Ca(2+)(in) = Ca(2+)(out). It catalyses the reaction Na(+)(in) = Na(+)(out). It carries out the reaction Mg(2+)(in) = Mg(2+)(out). The catalysed reaction is Li(+)(in) = Li(+)(out). The enzyme catalyses K(+)(in) = K(+)(out). It catalyses the reaction Sr(2+)(in) = Sr(2+)(out). Its function is as follows. Ionotropic glutamate receptor that functions as a ligand-gated cation channel, gated by L-glutamate and glutamatergic agonists such as alpha-amino-3-hydroxy-5-methyl-4-isoxazolepropionic acid (AMPA), quisqualic acid, and kainic acid. L-glutamate acts as an excitatory neurotransmitter at many synapses in the central nervous system. Binding of the excitatory neurotransmitter L-glutamate induces a conformation change, leading to the opening of the cation channel, and thereby converts the chemical signal to an electrical impulse upon entry of monovalent and divalent cations such as sodium and calcium. The receptor then desensitizes rapidly and enters in a transient inactive state, characterized by the presence of bound agonist. In the presence of CACNG2 or CACNG4 or CACNG7 or CACNG8, shows resensitization which is characterized by a delayed accumulation of current flux upon continued application of L-glutamate. Resensitization is blocked by CNIH2 through interaction with CACNG8 in the CACNG8-containing AMPA receptors complex. Calcium (Ca(2+)) permeability depends on subunits composition and, heteromeric channels containing edited GRIA2 subunit are calcium-impermeable. Also permeable to other divalents cations such as strontium(2+) and magnesium(2+) and monovalent cations such as potassium(1+) and lithium(1+). This Homo sapiens (Human) protein is Glutamate receptor 1.